Consider the following 258-residue polypeptide: Snake venom serine protease (258 aa).

A signal peptide spans 1-18 (MVLIRVLANLLILQLSYA). Positions 19-24 (QKSSEL) are excised as a propeptide. Residues 25–249 (VIGGDECNIN…YTEWIQSILA (225 aa)) form the Peptidase S1 domain. 6 disulfide bridges follow: C31–C163, C50–C66, C98–C256, C142–C210, C174–C189, and C200–C225. Catalysis depends on charge relay system residues H65 and D110. A glycan (N-linked (GlcNAc...) asparagine) is linked at N154. S204 (charge relay system) is an active-site residue.

This sequence belongs to the peptidase S1 family. Snake venom subfamily. Monomer. As to expression, expressed by the venom gland.

The protein localises to the secreted. Its function is as follows. Snake venom serine protease that may act in the hemostasis system of the prey. The protein is Snake venom serine protease of Lachesis stenophrys (Central American bushmaster).